Consider the following 192-residue polypeptide: Endoribonuclease YbeY (192 aa).

3 residues coordinate Zn(2+): histidine 109, histidine 113, and histidine 119. The disordered stretch occupies residues 142-192; that stretch reads VGAALREGGPARAAETETSWTRSPTSTSTRSPSGSTARGTRARSSRAGSGR. Low complexity predominate over residues 159-180; the sequence is TSWTRSPTSTSTRSPSGSTARG.

The protein belongs to the endoribonuclease YbeY family. It depends on Zn(2+) as a cofactor.

It localises to the cytoplasm. In terms of biological role, single strand-specific metallo-endoribonuclease involved in late-stage 70S ribosome quality control and in maturation of the 3' terminus of the 16S rRNA. The sequence is that of Endoribonuclease YbeY from Anaeromyxobacter sp. (strain Fw109-5).